Here is a 579-residue protein sequence, read N- to C-terminus: Deleted in azoospermia protein 4 (579 aa).

A compositionally biased stretch (polar residues) spans 1–10 (MSAANPETPN). Residues 1-27 (MSAANPETPNSTISREASTQSSSAAAS) are disordered. The segment covering 11 to 27 (STISREASTQSSSAAAS) has biased composition (low complexity). In terms of domain architecture, RRM 1 spans 40 to 115 (NTVFVGGIDA…KKLKLGPAIR (76 aa)). Polar residues predominate over residues 163–175 (QHVQSAANPETPN). A disordered region spans residues 163–192 (QHVQSAANPETPNSTISREASTQSSSAAAS). Positions 176–192 (STISREASTQSSSAAAS) are enriched in low complexity. The 76-residue stretch at 205 to 280 (NTVFVGGIDA…KKLKLGPAIR (76 aa)) folds into the RRM 2 domain. DAZ domains lie at 332 to 355 (AYSA…YNYQ), 356 to 379 (EYPT…YNYQ), 380 to 403 (PFPA…YNYQ), 404 to 427 (AFPA…YNYQ), 428 to 451 (PFPA…YNYQ), 452 to 475 (AFPA…YNYQ), 476 to 499 (AFPA…YNYQ), 500 to 523 (AFPA…YNYQ), and 524 to 547 (AFPA…YNYQ).

It belongs to the RRM DAZ family. Forms a heterodimer with BOLL and DAZL. Interacts with PUM2, DAZAP1, DAZAP2, DZIP1 and DZIP3. As to expression, testis-specific. Expression restricted to premeiotic germ cells, particularly in spermatogonia (at protein level).

It is found in the cytoplasm. The protein resides in the nucleus. RNA-binding protein that plays an essential role in spermatogenesis. May act by binding to the 3'-UTR of mRNAs and regulating their translation. The sequence is that of Deleted in azoospermia protein 4 (DAZ4) from Homo sapiens (Human).